Reading from the N-terminus, the 334-residue chain is Holliday junction branch migration complex subunit RuvB (334 aa).

Residues 1–182 (MDERLVSSEA…FGVMSRLEYY (182 aa)) are large ATPase domain (RuvB-L). ATP is bound by residues L21, R22, G63, K66, T67, T68, 129–131 (EDF), R172, Y182, and R219. T67 lines the Mg(2+) pocket. The interval 183 to 253 (TQEELADIVT…ISQNALERLQ (71 aa)) is small ATPAse domain (RuvB-S). Residues 256-334 (RLGLDHIDHK…HFQMEAPRYD (79 aa)) form a head domain (RuvB-H) region. DNA-binding residues include R311 and R316.

The protein belongs to the RuvB family. Homohexamer. Forms an RuvA(8)-RuvB(12)-Holliday junction (HJ) complex. HJ DNA is sandwiched between 2 RuvA tetramers; dsDNA enters through RuvA and exits via RuvB. An RuvB hexamer assembles on each DNA strand where it exits the tetramer. Each RuvB hexamer is contacted by two RuvA subunits (via domain III) on 2 adjacent RuvB subunits; this complex drives branch migration. In the full resolvosome a probable DNA-RuvA(4)-RuvB(12)-RuvC(2) complex forms which resolves the HJ. Homohexamer which interacts with RecU.

The protein resides in the cytoplasm. The catalysed reaction is ATP + H2O = ADP + phosphate + H(+). Functionally, the RuvA-RuvB-RuvC complex processes Holliday junction (HJ) DNA during genetic recombination and DNA repair, while the RuvA-RuvB complex plays an important role in the rescue of blocked DNA replication forks via replication fork reversal (RFR). RuvA specifically binds to HJ cruciform DNA, conferring on it an open structure. The RuvB hexamer acts as an ATP-dependent pump, pulling dsDNA into and through the RuvAB complex. RuvB forms 2 homohexamers on either side of HJ DNA bound by 1 or 2 RuvA tetramers; 4 subunits per hexamer contact DNA at a time. Coordinated motions by a converter formed by DNA-disengaged RuvB subunits stimulates ATP hydrolysis and nucleotide exchange. Immobilization of the converter enables RuvB to convert the ATP-contained energy into a lever motion, pulling 2 nucleotides of DNA out of the RuvA tetramer per ATP hydrolyzed, thus driving DNA branch migration. The RuvB motors rotate together with the DNA substrate, which together with the progressing nucleotide cycle form the mechanistic basis for DNA recombination by continuous HJ branch migration. Branch migration allows RuvC to scan DNA until it finds its consensus sequence, where it cleaves and resolves cruciform DNA. This chain is Holliday junction branch migration complex subunit RuvB, found in Bacillus subtilis (strain 168).